The primary structure comprises 123 residues: Proteasome assembly chaperone 4 (123 aa).

This sequence belongs to the PSMG4 family. As to quaternary structure, interacts with PSMG3. Associates with alpha subunits of the 20S proteasome.

In terms of biological role, chaperone protein which promotes assembly of the 20S proteasome. The protein is Proteasome assembly chaperone 4 of Homo sapiens (Human).